We begin with the raw amino-acid sequence, 116 residues long: MANNFRTDRVGMEIKREVNEILQKKVRDPRVQGVTITDVQMLGDLSMAKVYYTIMSNLASDNQKAQTGLEKATGTIKRELGHNLKMYKIPDLTFVKDESIEYGNKIDQMLRDLEKK.

It belongs to the RbfA family. Monomer. Binds 30S ribosomal subunits, but not 50S ribosomal subunits or 70S ribosomes.

It localises to the cytoplasm. Functionally, one of several proteins that assist in the late maturation steps of the functional core of the 30S ribosomal subunit. Associates with free 30S ribosomal subunits (but not with 30S subunits that are part of 70S ribosomes or polysomes). Required for efficient processing of 16S rRNA. May interact with the 5'-terminal helix region of 16S rRNA. The chain is Ribosome-binding factor A from Streptococcus sanguinis (strain SK36).